Here is an 875-residue protein sequence, read N- to C-terminus: Serine/threonine-protein phosphatase 4 regulatory subunit 4 (875 aa).

HEAT repeat units lie at residues 215 to 253 (ILPLVKSLCQDVEYEVRSCMCRQLENIAQGIGAELTKNV) and 254 to 292 (VLPELIELSRDESGSVRLAAFETLVNMLDMFDTDDRSQT). Positions 686–730 (MFQKKNYEKDLLDQEKEREELLFLEMEQLEKEKHQSDGRLASDKS) form a coiled coil. The segment covering 718 to 739 (KHQSDGRLASDKSFEKKRRDSR) has biased composition (basic and acidic residues). The interval 718 to 773 (KHQSDGRLASDKSFEKKRRDSRTSTQSLSKNLPISVPGPSSSTASTSKEIKKSKLT) is disordered. Residues 740–764 (TSTQSLSKNLPISVPGPSSSTASTS) show a composition bias toward polar residues. Position 777 is a phosphoserine (S777). T799 is modified (phosphothreonine). Polar residues predominate over residues 825–859 (RNASSVPASFSPNPVMPSTSRGPGNTADPKSSGSK). The segment at 825-875 (RNASSVPASFSPNPVMPSTSRGPGNTADPKSSGSKDAQPRKATLKSRKSNP) is disordered. The span at 866–875 (ATLKSRKSNP) shows a compositional bias: basic residues.

In terms of assembly, serine/threonine-protein phosphatase 4 (PP4) occurs in different assemblies of the catalytic and one or more regulatory subunits. Component of the PP4 complex PPP4C-PPP4R4.

It localises to the cytoplasm. In terms of biological role, putative regulatory subunit of serine/threonine-protein phosphatase 4. The polypeptide is Serine/threonine-protein phosphatase 4 regulatory subunit 4 (Ppp4r4) (Mus musculus (Mouse)).